The chain runs to 211 residues: Protein-L-isoaspartate O-methyltransferase (211 aa).

Ser59 is a catalytic residue.

Belongs to the methyltransferase superfamily. L-isoaspartyl/D-aspartyl protein methyltransferase family.

It localises to the cytoplasm. It carries out the reaction [protein]-L-isoaspartate + S-adenosyl-L-methionine = [protein]-L-isoaspartate alpha-methyl ester + S-adenosyl-L-homocysteine. Catalyzes the methyl esterification of L-isoaspartyl residues in peptides and proteins that result from spontaneous decomposition of normal L-aspartyl and L-asparaginyl residues. It plays a role in the repair and/or degradation of damaged proteins. In Ignicoccus hospitalis (strain KIN4/I / DSM 18386 / JCM 14125), this protein is Protein-L-isoaspartate O-methyltransferase.